The primary structure comprises 388 residues: Acetate kinase (388 aa).

Mg(2+) is bound at residue asparagine 8. Residue lysine 15 coordinates ATP. Arginine 88 is a substrate binding site. Aspartate 144 acts as the Proton donor/acceptor in catalysis. ATP contacts are provided by residues 202-206 (HLGNG), 276-278 (DMR), and 321-325 (GVGEN). Glutamate 375 contacts Mg(2+).

This sequence belongs to the acetokinase family. As to quaternary structure, homodimer. Mg(2+) is required as a cofactor. The cofactor is Mn(2+).

The protein resides in the cytoplasm. The enzyme catalyses acetate + ATP = acetyl phosphate + ADP. Its pathway is metabolic intermediate biosynthesis; acetyl-CoA biosynthesis; acetyl-CoA from acetate: step 1/2. Its function is as follows. Catalyzes the formation of acetyl phosphate from acetate and ATP. Can also catalyze the reverse reaction. The sequence is that of Acetate kinase from Mycoplasmoides gallisepticum (strain R(low / passage 15 / clone 2)) (Mycoplasma gallisepticum).